Reading from the N-terminus, the 785-residue chain is Endonuclease MutS2 (785 aa).

332–339 (GPNTGGKT) is an ATP binding site. In terms of domain architecture, Smr spans 710–785 (VDLRGMDSEE…GNGVTVVELK (76 aa)).

This sequence belongs to the DNA mismatch repair MutS family. MutS2 subfamily. Homodimer. Binds to stalled ribosomes, contacting rRNA.

Endonuclease that is involved in the suppression of homologous recombination and thus may have a key role in the control of bacterial genetic diversity. In terms of biological role, acts as a ribosome collision sensor, splitting the ribosome into its 2 subunits. Detects stalled/collided 70S ribosomes which it binds and splits by an ATP-hydrolysis driven conformational change. Acts upstream of the ribosome quality control system (RQC), a ribosome-associated complex that mediates the extraction of incompletely synthesized nascent chains from stalled ribosomes and their subsequent degradation. Probably generates substrates for RQC. This is Endonuclease MutS2 from Clostridium novyi (strain NT).